The primary structure comprises 902 residues: Transcription factor E2F7 (902 aa).

A Phosphoserine modification is found at Ser96. Residues 143-212 mediate DNA binding; sequence RKQKSLGLLC…VAKNQYGWHG (70 aa). Basic and acidic residues predominate over residues 253 to 269; that stretch reads ERRKDGSPDPRDQHLLD. The disordered stretch occupies residues 253–283; that stretch reads ERRKDGSPDPRDQHLLDFSESDYPSSSANSR. A DNA-binding region spans residues 283-368; it reads RKDKSLRIMS…GRKPAFKWIG (86 aa). Ser411 bears the Phosphoserine mark. Disordered stretches follow at residues 418-439, 589-627, and 665-690; these read SEKI…KQGP, LCEE…SNST, and NGFI…DNEI. Basic and acidic residues-rich tracts occupy residues 589–611 and 679–690; these read LCEE…REFE and PDTEKSSNDNEI. Ser832 is subject to Phosphoserine. A disordered region spans residues 844–902; that stretch reads KAEQSPAPATPKSIQRRHRETFFKTPGSLGDPAFRRERNQSRNTSSAQRRLEISSSGPD. The span at 884–902 shows a compositional bias: polar residues; the sequence is SRNTSSAQRRLEISSSGPD.

Belongs to the E2F/DP family. As to quaternary structure, homodimer and heterodimer: mainly forms homodimers and, to a lesser extent, heterodimers with E2F8. Dimerization is important for DNA-binding. Interacts with HIF1A. Interacts with MN1.

It localises to the nucleus. Atypical E2F transcription factor that participates in various processes such as angiogenesis, polyploidization of specialized cells and DNA damage response. Mainly acts as a transcription repressor that binds DNA independently of DP proteins and specifically recognizes the E2 recognition site 5'-TTTC[CG]CGC-3'. Directly represses transcription of classical E2F transcription factors such as E2F1. Acts as a regulator of S-phase by recognizing and binding the E2-related site 5'-TTCCCGCC-3' and mediating repression of G1/S-regulated genes. Plays a key role in polyploidization of cells in placenta and liver by regulating the endocycle, probably by repressing genes promoting cytokinesis and antagonizing action of classical E2F proteins (E2F1, E2F2 and/or E2F3). Required for placental development by promoting polyploidization of trophoblast giant cells. Also involved in DNA damage response: up-regulated by p53/TP53 following genotoxic stress and acts as a downstream effector of p53/TP53-dependent repression by mediating repression of indirect p53/TP53 target genes involved in DNA replication. Acts as a promoter of sprouting angiogenesis, possibly by acting as a transcription activator: associates with HIF1A, recognizes and binds the VEGFA promoter, which is different from canonical E2 recognition site, and activates expression of the VEGFA gene. Acts as a negative regulator of keratinocyte differentiation. In Rattus norvegicus (Rat), this protein is Transcription factor E2F7 (E2f7).